We begin with the raw amino-acid sequence, 184 residues long: MKNLTDSFVYLGHWPAAGSFGFNTDILATNPINLSVVFGVLIFFGKGVLNDLLDNRKQRILNTIRNSEELREGAIQQLENARARLRKVEAEADQFRVNGYSEIEREKLNLINSTSKTLKQLENYKNETILVEQQRTINQVRERIFQQALQGAIGTLNSCLSNELHLRTINANIGMFGTMKKITD.

Residues 27-49 (LATNPINLSVVFGVLIFFGKGVL) traverse the membrane as a helical segment.

This sequence belongs to the ATPase B chain family. In terms of assembly, F-type ATPases have 2 components, F(1) - the catalytic core - and F(0) - the membrane proton channel. F(1) has five subunits: alpha(3), beta(3), gamma(1), delta(1), epsilon(1). F(0) has four main subunits: a(1), b(1), b'(1) and c(10-14). The alpha and beta chains form an alternating ring which encloses part of the gamma chain. F(1) is attached to F(0) by a central stalk formed by the gamma and epsilon chains, while a peripheral stalk is formed by the delta, b and b' chains.

It localises to the plastid. Its subcellular location is the chloroplast thylakoid membrane. In terms of biological role, f(1)F(0) ATP synthase produces ATP from ADP in the presence of a proton or sodium gradient. F-type ATPases consist of two structural domains, F(1) containing the extramembraneous catalytic core and F(0) containing the membrane proton channel, linked together by a central stalk and a peripheral stalk. During catalysis, ATP synthesis in the catalytic domain of F(1) is coupled via a rotary mechanism of the central stalk subunits to proton translocation. Component of the F(0) channel, it forms part of the peripheral stalk, linking F(1) to F(0). The chain is ATP synthase subunit b, chloroplastic from Lobularia maritima (Sweet alyssum).